We begin with the raw amino-acid sequence, 84 residues long: uncharacterized protein (84 aa).

The 2Fe-2S ferredoxin-type domain occupies 2–84 (ARVTLRITGT…RAKGDIEIEM (83 aa)). [2Fe-2S] cluster contacts are provided by C37, C42, C45, and C74.

[2Fe-2S] cluster serves as cofactor.

This is an uncharacterized protein from Escherichia coli O6:H1 (strain CFT073 / ATCC 700928 / UPEC).